A 286-amino-acid chain; its full sequence is ATP synthase gamma chain (286 aa).

The protein belongs to the ATPase gamma chain family. As to quaternary structure, F-type ATPases have 2 components, CF(1) - the catalytic core - and CF(0) - the membrane proton channel. CF(1) has five subunits: alpha(3), beta(3), gamma(1), delta(1), epsilon(1). CF(0) has three main subunits: a, b and c.

It localises to the cell inner membrane. Functionally, produces ATP from ADP in the presence of a proton gradient across the membrane. The gamma chain is believed to be important in regulating ATPase activity and the flow of protons through the CF(0) complex. The sequence is that of ATP synthase gamma chain from Christiangramia forsetii (strain DSM 17595 / CGMCC 1.15422 / KT0803) (Gramella forsetii).